Here is a 760-residue protein sequence, read N- to C-terminus: Endoplasmin homolog (760 aa).

The N-terminal stretch at M1–A23 is a signal peptide. Residues N95, D137, N150, and F187 each contribute to the ATP site. The N-linked (GlcNAc...) asparagine glycan is linked to N95. N423 carries N-linked (GlcNAc...) asparagine glycosylation. Positions S727–L760 are disordered. The segment covering A741 to L760 has biased composition (acidic residues). The Prevents secretion from ER motif lies at H757–L760.

This sequence belongs to the heat shock protein 90 family.

It localises to the endoplasmic reticulum lumen. Functionally, molecular chaperone that functions in the processing and transport of secreted proteins. In Caenorhabditis elegans, this protein is Endoplasmin homolog.